Here is a 552-residue protein sequence, read N- to C-terminus: Asparagine--tRNA ligase, cytoplasmic (552 aa).

The segment at 1-23 is disordered; the sequence is MSQVYVNEKTGADSTDVSGSEQQ. The span at 12-23 shows a compositional bias: polar residues; sequence ADSTDVSGSEQQ.

The protein belongs to the class-II aminoacyl-tRNA synthetase family.

Its subcellular location is the cytoplasm. It carries out the reaction tRNA(Asn) + L-asparagine + ATP = L-asparaginyl-tRNA(Asn) + AMP + diphosphate + H(+). In Debaryomyces hansenii (strain ATCC 36239 / CBS 767 / BCRC 21394 / JCM 1990 / NBRC 0083 / IGC 2968) (Yeast), this protein is Asparagine--tRNA ligase, cytoplasmic (DED81).